The sequence spans 105 residues: Large ribosomal subunit protein uL23 (105 aa).

It belongs to the universal ribosomal protein uL23 family. Part of the 50S ribosomal subunit. Contacts protein L29, and trigger factor when it is bound to the ribosome.

One of the early assembly proteins it binds 23S rRNA. One of the proteins that surrounds the polypeptide exit tunnel on the outside of the ribosome. Forms the main docking site for trigger factor binding to the ribosome. This is Large ribosomal subunit protein uL23 from Ureaplasma urealyticum serovar 10 (strain ATCC 33699 / Western).